A 96-amino-acid chain; its full sequence is Co-chaperonin GroES (96 aa).

The protein belongs to the GroES chaperonin family. In terms of assembly, heptamer of 7 subunits arranged in a ring. Interacts with the chaperonin GroEL.

It localises to the cytoplasm. In terms of biological role, together with the chaperonin GroEL, plays an essential role in assisting protein folding. The GroEL-GroES system forms a nano-cage that allows encapsulation of the non-native substrate proteins and provides a physical environment optimized to promote and accelerate protein folding. GroES binds to the apical surface of the GroEL ring, thereby capping the opening of the GroEL channel. In Teredinibacter turnerae (strain ATCC 39867 / T7901), this protein is Co-chaperonin GroES.